A 588-amino-acid chain; its full sequence is L-fucose isomerase (588 aa).

Residues Glu-335 and Asp-359 each act as proton acceptor in the active site. Glu-335, Asp-359, and His-525 together coordinate Mn(2+).

This sequence belongs to the L-fucose isomerase family. It depends on Mn(2+) as a cofactor.

It is found in the cytoplasm. It catalyses the reaction L-fucose = L-fuculose. It participates in carbohydrate degradation; L-fucose degradation; L-lactaldehyde and glycerone phosphate from L-fucose: step 1/3. Functionally, converts the aldose L-fucose into the corresponding ketose L-fuculose. This is L-fucose isomerase from Streptococcus pneumoniae (strain ATCC 700669 / Spain 23F-1).